Here is a 229-residue protein sequence, read N- to C-terminus: Large ribosomal subunit protein uL1 (229 aa).

It belongs to the universal ribosomal protein uL1 family. In terms of assembly, part of the 50S ribosomal subunit.

In terms of biological role, binds directly to 23S rRNA. The L1 stalk is quite mobile in the ribosome, and is involved in E site tRNA release. Protein L1 is also a translational repressor protein, it controls the translation of the L11 operon by binding to its mRNA. This is Large ribosomal subunit protein uL1 from Streptococcus sanguinis (strain SK36).